A 29-amino-acid polypeptide reads, in one-letter code: Photosystem I reaction center subunit XII (29 aa).

The chain crosses the membrane as a helical span at residues Ile-7–Thr-26.

Belongs to the PsaM family.

It localises to the plastid. It is found in the chloroplast thylakoid membrane. The polypeptide is Photosystem I reaction center subunit XII (Guillardia theta (Cryptophyte)).